Here is a 501-residue protein sequence, read N- to C-terminus: METILEQQRRYHEEKERLMDVMAKEMLTKKSTLRDQINSDHRTRAMQDRYMEVSGNLRDLYDDKDGLRKEELNAISGPNEFAEFYNRLKQIKEFHRKHPNEICVPMSVEFEELLKARENPSEEAQNLVEFTDEEGYGRYLDLHDCYLKYINLKASEKLDYITYLSIFDQLFDIPKERKNAEYKRYLEMLLEYLQDYTDRVKPLQDQNELFGKIQTDFEKKWDNGTFPGWPKETSSALTHAGAHLDLSAFSSWEELASLGLDRLKSALLALGLKCGGTLEERAQRLFSTKGKSLESLDTSLFAKNPKSKGTKRDTERNKDIAFLEAQIYEYVEILGEQRQLTHENVQRKQARTGEEREEEEEEQISESESEDEENEIIYNPKNLPLGWDGKPIPYWLYKLHGLNINYNCEICGNYTYRGPKAFQRHFAEWRHAHGMRCLGIPNTAHFANVTQIEDAVSLWAKLKLQKASERWQPDTEEEYEDSSGNVVNKKTYEDLKRQGLL.

The residue at position 1 (M1) is an N-acetylmethionine. A phosphoserine mark is found at S54 and S121. Positions K175–N179 match the Nuclear localization signal motif. 2 positions are modified to phosphoserine: S295 and S299. Positions H342–E354 are enriched in basic and acidic residues. Positions H342 to N374 are disordered. Residues E355 to N374 are compositionally biased toward acidic residues. 3 positions are modified to phosphoserine: S365, S367, and S369. A Matrin-type zinc finger spans residues Y406–C437. T475 is subject to Phosphothreonine.

Belongs to the SF3A3 family. As to quaternary structure, component of the 17S U2 SnRNP complex, a ribonucleoprotein complex that contains small nuclear RNA (snRNA) U2 and a number of specific proteins. Part of the SF3A subcomplex of the 17S U2 SnRNP complex which is composed of three subunits; SF3A3/SAP61, SF3A2/SAP62 and SF3A1/SAP114. SF3A associates with the splicing factor SF3B and a 12S RNA unit to form the mature 17S U2 small nuclear ribonucleoprotein complex (17S U2 snRNP). Identified in the spliceosome 'E' complex, a precursor of the spliceosome 'A' complex. Identified in the spliceosome 'A' and 'B' complexes. Identified in the spliceosome 'C' complex.

The protein localises to the nucleus speckle. The protein resides in the nucleus. Its function is as follows. Component of the 17S U2 SnRNP complex of the spliceosome, a large ribonucleoprotein complex that removes introns from transcribed pre-mRNAs. The 17S U2 SnRNP complex (1) directly participates in early spliceosome assembly and (2) mediates recognition of the intron branch site during pre-mRNA splicing by promoting the selection of the pre-mRNA branch-site adenosine, the nucleophile for the first step of splicing. Within the 17S U2 SnRNP complex, SF3A3 is part of the SF3A subcomplex that contributes to the assembly of the 17S U2 snRNP, and the subsequent assembly of the pre-spliceosome 'E' complex and the pre-catalytic spliceosome 'A' complex. Involved in pre-mRNA splicing as a component of pre-catalytic spliceosome 'B' complexes. The polypeptide is Splicing factor 3A subunit 3 (Sf3a3) (Mus musculus (Mouse)).